The following is a 467-amino-acid chain: Asparagine--tRNA ligase (467 aa).

The protein belongs to the class-II aminoacyl-tRNA synthetase family. Homodimer.

The protein localises to the cytoplasm. It carries out the reaction tRNA(Asn) + L-asparagine + ATP = L-asparaginyl-tRNA(Asn) + AMP + diphosphate + H(+). This is Asparagine--tRNA ligase from Legionella pneumophila (strain Lens).